The primary structure comprises 298 residues: Diphthine methyl ester synthase (298 aa).

S-adenosyl-L-methionine-binding positions include Leu-9, Asp-85, Gly-88, Ser-113–Val-114, Leu-164, Leu-222, and His-247.

Belongs to the diphthine synthase family.

It is found in the cytoplasm. The catalysed reaction is 2-[(3S)-amino-3-carboxypropyl]-L-histidyl-[translation elongation factor 2] + 4 S-adenosyl-L-methionine = diphthine methyl ester-[translation elongation factor 2] + 4 S-adenosyl-L-homocysteine + 3 H(+). Its pathway is protein modification; peptidyl-diphthamide biosynthesis. In terms of biological role, S-adenosyl-L-methionine-dependent methyltransferase that catalyzes four methylations of the modified target histidine residue in translation elongation factor 2 (EF-2), to form an intermediate called diphthine methyl ester. The four successive methylation reactions represent the second step of diphthamide biosynthesis. The protein is Diphthine methyl ester synthase (DPH5) of Kluyveromyces lactis (strain ATCC 8585 / CBS 2359 / DSM 70799 / NBRC 1267 / NRRL Y-1140 / WM37) (Yeast).